The primary structure comprises 530 residues: MVGTTLKMRGDENASENFKQVQLKKLTVPSMEATTKRAALGDLQNRGISRPIAAKDAAQKDSKDLKLTDALRNAKARVDSHWKKQPLGSTNGNGNGAVPPKVNEGGVSAFLRSNSVRNRVPTKTTVEPTKVTVKSSSSENVNEPTLKREDSNLSKKSLTKLRAALAKPVMGVSGIRREPVAVSRKEAETKKELPETKKDSLEVKKDATRMPLIRGNSAVTTTTSTMPTTMSLSSKRLAGIEDIDANDKENLVLVSEYVNDIYDYLYQVELEQPIHKDHLAGQKEVSHKMRAVLIDWINEVHLQFHLAAETFQLAVAIIDRYLQVVKDTKRTYLQLVGVTALFIATKYEELFPPAIGDFVFITDDTYTARQIRQMELQIFKAIDCNLSRPLPIHFLRRYSKAAGAEDEHHTMSKYFIELASVDYEMATYRPSEIAAASLFLSLHLLNGNHRAGTGFNDRHWTPTLTFYSRYSAAHLRPITRLIAKLARDAPQAKLKAIYNKYQGSKFQKIALRTELTGALMDSIVGQSQRK.

A disordered region spans residues 76-152 (ARVDSHWKKQ…EPTLKREDSN (77 aa)). Low complexity predominate over residues 121-144 (PTKTTVEPTKVTVKSSSSENVNEP). Ser-137 bears the Phosphoserine mark.

The protein belongs to the cyclin family. Cyclin AB subfamily. Interacts with the protein kinase Cdk1 to form a serine/threonine kinase holoenzyme complex also known as maturation promoting factor (MPF). The cyclin subunit imparts substrate specificity to the complex.

Essential for the control of the cell cycle at the G2/M (mitosis) transition. The protein is G2/mitotic-specific cyclin-B (CycB) of Drosophila melanogaster (Fruit fly).